A 454-amino-acid polypeptide reads, in one-letter code: tRNA modification GTPase MnmE (454 aa).

The (6S)-5-formyl-5,6,7,8-tetrahydrofolate site is built by Arg23, Glu80, and Lys120. In terms of domain architecture, TrmE-type G spans Gly216–Gly377. Asn226 lines the K(+) pocket. Residues Asn226–Ser231, Thr245–Thr251, Asp270–Gly273, Asn335–Asp338, and Ser358–Arg360 each bind GTP. Ser230 is a Mg(2+) binding site. K(+)-binding residues include Thr245, Ile247, and Thr250. Position 251 (Thr251) interacts with Mg(2+). Residue Lys454 participates in (6S)-5-formyl-5,6,7,8-tetrahydrofolate binding.

It belongs to the TRAFAC class TrmE-Era-EngA-EngB-Septin-like GTPase superfamily. TrmE GTPase family. As to quaternary structure, homodimer. Heterotetramer of two MnmE and two MnmG subunits. K(+) serves as cofactor.

It is found in the cytoplasm. Exhibits a very high intrinsic GTPase hydrolysis rate. Involved in the addition of a carboxymethylaminomethyl (cmnm) group at the wobble position (U34) of certain tRNAs, forming tRNA-cmnm(5)s(2)U34. The protein is tRNA modification GTPase MnmE of Yersinia pestis bv. Antiqua (strain Antiqua).